A 299-amino-acid polypeptide reads, in one-letter code: 4-diphosphocytidyl-2-C-methyl-D-erythritol kinase (299 aa).

The active site involves Lys-16. Residue 101–111 (PVAAGIGGGSA) participates in ATP binding. Residue Asp-143 is part of the active site.

It belongs to the GHMP kinase family. IspE subfamily.

It carries out the reaction 4-CDP-2-C-methyl-D-erythritol + ATP = 4-CDP-2-C-methyl-D-erythritol 2-phosphate + ADP + H(+). The protein operates within isoprenoid biosynthesis; isopentenyl diphosphate biosynthesis via DXP pathway; isopentenyl diphosphate from 1-deoxy-D-xylulose 5-phosphate: step 3/6. In terms of biological role, catalyzes the phosphorylation of the position 2 hydroxy group of 4-diphosphocytidyl-2C-methyl-D-erythritol. The sequence is that of 4-diphosphocytidyl-2-C-methyl-D-erythritol kinase from Rhodopseudomonas palustris (strain ATCC BAA-98 / CGA009).